The following is a 376-amino-acid chain: Lysocardiolipin acyltransferase 1 (376 aa).

A helical membrane pass occupies residues 9 to 29; sequence FILFLFAGSFFGSIFMLGPIL. Asn35 carries an N-linked (GlcNAc...) asparagine glycan. A helical membrane pass occupies residues 48-68; sequence ATWLTLPVALLETMFGVRVVI. The short motif at 85–90 is the HXXXXD motif element; the sequence is HRTRVD. Lys183 is modified (N6-acetyllysine). The next 2 membrane-spanning stretches (helical) occupy residues 309 to 329 and 336 to 356; these read LLSI…IYLY and FIIS…LEII.

Belongs to the 1-acyl-sn-glycerol-3-phosphate acyltransferase family. As to expression, widely expressed with highest expression in heart, liver and 12.5 dpc aorta-gonad-mesonephros and lower levels in the 16 dpc fetal liver and adult bone marrow. In bone marrow, highest levels are found in B-cells compared with whole bone marrow, T-cells, erythrocytes, and granulocytes.

The protein localises to the endoplasmic reticulum membrane. The catalysed reaction is a 1-acyl-sn-glycero-3-phosphate + an acyl-CoA = a 1,2-diacyl-sn-glycero-3-phosphate + CoA. The enzyme catalyses a 1-acyl-sn-glycero-3-phospho-(1D-myo-inositol) + an acyl-CoA = a 1,2-diacyl-sn-glycero-3-phospho-(1D-myo-inositol) + CoA. It catalyses the reaction 1-acyl-sn-glycero-3-phospho-(1'-sn-glycerol) + an acyl-CoA = a 1,2-diacyl-sn-glycero-3-phospho-(1'-sn-glycerol) + CoA. It carries out the reaction 1-hexadecanoyl-sn-glycero-3-phosphate + (9Z)-octadecenoyl-CoA = 1-hexadecanoyl-2-(9Z-octadecenoyl)-sn-glycero-3-phosphate + CoA. The catalysed reaction is 1-(9Z-octadecenoyl)-sn-glycero-3-phosphate + (9Z)-octadecenoyl-CoA = 1,2-di-(9Z-octadecenoyl)-sn-glycero-3-phosphate + CoA. The enzyme catalyses 1-(9Z,12Z)-octadecadienoyl-sn-glycero-3-phosphate + (9Z)-octadecenoyl-CoA = 1-(9Z,12Z)-octadecadienoyl-2-(9Z)-octadecenoyl-sn-glycero-3-phosphate + CoA. It catalyses the reaction 1-(9Z,12Z,15Z)-octadecatrienoyl-sn-glycero-3-phosphate + (9Z)-octadecenoyl-CoA = 1-(9Z,12Z,15Z)-octadecatrienoyl-2-(9Z)-octadecenoyl-sn-glycero-3-phosphate + CoA. It carries out the reaction 1-(9Z-octadecenoyl)-sn-glycero-3-phosphate + hexadecanoyl-CoA = 1-(9Z)-octadecenoyl-2-hexadecanoyl-sn-glycero-3-phosphate + CoA. The catalysed reaction is 1-(9Z-octadecenoyl)-sn-glycero-3-phosphate + octadecanoyl-CoA = 1-(9Z-octadecenoyl)-2-octadecanoyl-sn-glycero-3-phosphate + CoA. The enzyme catalyses 1-acyl-sn-glycero-3-phospho-(1'-sn-glycerol) + (9Z)-octadecenoyl-CoA = 1-acyl-2-(9Z-octadecenoyl)-sn-glycero-3-phospho-(1'-sn-glycerol) + CoA. It catalyses the reaction a 1-acyl-sn-glycero-3-phospho-(1D-myo-inositol) + (9Z)-octadecenoyl-CoA = a 1-acyl-2-(9Z-octadecenoyl)-sn-glycero-3-phospho-(1D-myo-inositol) + CoA. It carries out the reaction 1-hexadecanoyl-sn-glycero-3-phospho-(1D-myo-inositol) + hexadecanoyl-CoA = 1,2-dihexadecanoyl-sn-glycero-3-phospho-(1D-myo-inositol) + CoA. The catalysed reaction is 1-hexadecanoyl-sn-glycero-3-phospho-(1D-myo-inositol) + octadecanoyl-CoA = 1-hexadecanoyl-2-octadecanoyl-sn-glycero-3-phospho-(1D-myo-inositol) + CoA. The enzyme catalyses 1-hexadecanoyl-sn-glycero-3-phospho-(1D-myo-inositol) + (9Z)-octadecenoyl-CoA = 1-hexadecanoyl-2-(9Z-octadecenoyl)-sn-glycero-3-phospho-(1D-myo-inositol) + CoA. It catalyses the reaction 1-hexadecanoyl-sn-glycero-3-phospho-(1D-myo-inositol) + (9Z,12Z)-octadecadienoyl-CoA = 1-hexadecanoyl-2-(9Z,12Z-octadecadienoyl)-sn-glycero-3-phospho-(1D-myo-inositol) + CoA. It carries out the reaction 1-hexadecanoyl-sn-glycero-3-phospho-(1D-myo-inositol) + (5Z,8Z,11Z,14Z)-eicosatetraenoyl-CoA = 1-hexadecanoyl-2-(5Z,8Z,11Z,14Z-eicosatetraenoyl)-sn-glycero-3-phospho-D-myo-inositol + CoA. The catalysed reaction is 1-hexadecanoyl-sn-glycero-3-phospho-(1'-sn-glycerol) + hexadecanoyl-CoA = 1,2-dihexadecanoyl-sn-glycero-3-phospho-(1'-sn-glycerol) + CoA. The enzyme catalyses 1-hexadecanoyl-sn-glycero-3-phospho-(1'-sn-glycerol) + octadecanoyl-CoA = 1-hexadecanoyl-2-octadecanoyl-sn-glycero-3-phospho-(1'-sn-glycerol) + CoA. It catalyses the reaction 1-hexadecanoyl-sn-glycero-3-phospho-(1'-sn-glycerol) + (9Z)-octadecenoyl-CoA = 1-hexadecanoyl-2-(9Z-octadecenoyl)-sn-glycero-3-phospho-(1'-sn-glycerol) + CoA. It carries out the reaction 1-hexadecanoyl-sn-glycero-3-phospho-(1'-sn-glycerol) + (9Z,12Z)-octadecadienoyl-CoA = 1-hexadecanoyl-2-(9Z,12Z-octadecadienoyl)-sn-glycero-3-phospho-(1'-sn-glycerol) + CoA. The catalysed reaction is 1-tetradecanoyl-sn-glycero-3-phospho-(1'-sn-glycerol) + (9Z)-octadecenoyl-CoA = 1-tetradecanoyl-2-(9Z-octadecenoyl)-sn-glycero-3-phospho-(1'-sn-glycerol) + CoA. The enzyme catalyses 1-octadecanoyl-sn-glycero-3-phospho-(1'-sn-glycerol) + (9Z)-octadecenoyl-CoA = 1-octadecanoyl-2-(9Z-octadecenoyl)-sn-glycero-3-phospho-(1'-sn-glycerol) + CoA. It catalyses the reaction 1-(9Z-octadecenoyl)-sn-glycero-3-phospho-(1'-sn-glycerol) + (9Z)-octadecenoyl-CoA = 1,2-di-(9Z-octadecenoyl)-sn-glycero-3-phospho-(1'-sn-glycerol) + CoA. It carries out the reaction 1-hexadecanoyl-sn-glycero-3-phospho-(1D-myo-inositol) + dodecanoyl-CoA = 1-hexadecanoyl-2-dodecanoyl-sn-glycero-3-phospho-(1D-myo-inositol) + CoA. The catalysed reaction is 1',3'-bis-[1-acyl-sn-glycero-3-phospho]-glycerol + (9Z)-octadecenoyl-CoA = 1'-[1-acyl-2-(9Z)-octadecenoyl-sn-glycero-3-phospho],3'-[1-acyl,2-hydroxy-sn-glycero-3-phospho]-glycerol + CoA. The enzyme catalyses 1'-[1,2-diacyl-sn-glycero-3-phospho],3'-[1-acyl-sn-glycero-3-phospho]-glycerol + (9Z)-octadecenoyl-CoA = 1'-[1,2-diacyl-sn-glycero-3-phospho],3'-[1-acyl,2-(9Z)-octadecenoyl-sn-glycero-3-phospho]-glycerol + CoA. It catalyses the reaction 1'-[1,2-diacyl-sn-glycero-3-phospho],3'-[1-acyl-sn-glycero-3-phospho]-glycerol + (9Z,12Z)-octadecadienoyl-CoA = 1'-[1,2-diacyl-sn-glycero-3-phospho],3'-[1-acyl,2-(9Z,12Z)-octadecadienoyl-sn-glycero-3-phospho]-glycerol + CoA. It carries out the reaction 1'-[1,2-diacyl-sn-glycero-3-phospho],3'-[1-acyl-sn-glycero-3-phospho]-glycerol + dodecanoyl-CoA = 1'-[1,2-diacyl-sn-glycero-3-phospho],3'-[1-acyl,2-dodecanoyl-sn-glycero-3-phospho]-glycerol + CoA. The catalysed reaction is 1',3'-bis-[1-acyl-sn-glycero-3-phospho]-glycerol + dodecanoyl-CoA = 1'-[1-acyl-2-dodecanoyl-sn-glycero-3-phospho],3'-[1-acyl,2-hydroxy-sn-glycero-3-phospho]-glycerol + CoA. The enzyme catalyses a 1-acyl-sn-glycero-3-phosphate + (9Z)-octadecenoyl-CoA = a 1-acyl-2-(9Z-octadecenoyl)-sn-glycero-3-phosphate + CoA. It catalyses the reaction 1',3'-bis-[1-acyl-sn-glycero-3-phospho]-glycerol + (9Z,12Z)-octadecadienoyl-CoA = 1'-[1-acyl-2-(9Z,12Z)-octadecadienoyl-sn-glycero-3-phospho],3'-[1-acyl,2-hydroxy-sn-glycero-3-phospho]-glycerol + CoA. It carries out the reaction 1',3'-bis-[1-acyl-sn-glycero-3-phospho]-glycerol + hexadecanoyl-CoA = 1'-[1-acyl-2-hexadecanoyl-sn-glycero-3-phospho],3'-[1-acyl,2-hydroxy-sn-glycero-3-phospho]-glycerol + CoA. The catalysed reaction is 1',3'-bis-[1-acyl-sn-glycero-3-phospho]-glycerol + octadecanoyl-CoA = 1'-[1-acyl-2-octadecanoyl-sn-glycero-3-phospho],3'-[1-acyl,2-hydroxy-sn-glycero-3-phospho]-glycerol + CoA. The enzyme catalyses 1'-[1,2-diacyl-sn-glycero-3-phospho],3'-[1-acyl-sn-glycero-3-phospho]-glycerol + octanoyl-CoA = 1'-[1,2-diacyl-sn-glycero-3-phospho],3'-[1-acyl,2-octanoyl-sn-glycero-3-phospho]-glycerol + CoA. It catalyses the reaction 1',3'-bis-[1-acyl-sn-glycero-3-phospho]-glycerol + octanoyl-CoA = 1'-[1-acyl-2-octanoyl-sn-glycero-3-phospho],3'-[1-acyl,2-hydroxy-sn-glycero-3-phospho]-glycerol + CoA. It carries out the reaction 1'-[1,2-diacyl-sn-glycero-3-phospho],3'-[1-acyl-sn-glycero-3-phospho]-glycerol + hexadecanoyl-CoA = 1'-[1,2-diacyl-sn-glycero-3-phospho],3'-[1-acyl,2-hexadecanoyl-sn-glycero-3-phospho]-glycerol + CoA. The catalysed reaction is 1'-[1,2-diacyl-sn-glycero-3-phospho],3'-[1-acyl-sn-glycero-3-phospho]-glycerol + (5Z,8Z,11Z,14Z)-eicosatetraenoyl-CoA = 1'-[1,2-diacyl-sn-glycero-3-phospho],3'-[1-acyl,2-(5Z,8Z,11Z,14Z)-eicosatetraenoyl-sn-glycero-3-phospho]-glycerol + CoA. The enzyme catalyses 1',3'-bis-[1-acyl-sn-glycero-3-phospho]-glycerol + (5Z,8Z,11Z,14Z)-eicosatetraenoyl-CoA = 1'-[1-acyl-2-(5Z,8Z,11Z,14Z)-eicosatetraenoyl-sn-glycero-3-phospho],3'-[1-acyl,2-hydroxy-sn-glycero-3-phospho]-glycerol + CoA. It catalyses the reaction a 1-acyl-sn-glycero-3-phospho-(1D-myo-inositol) + octadecanoyl-CoA = a 1-acyl-2-octadecanoyl-sn-glycero-3-phospho-(1D-myo-inositol) + CoA. It carries out the reaction a 2-acyl-sn-glycero-3-phospho-D-myo-inositol + octadecanoyl-CoA = 1-octadecanoyl-2-acyl-sn-glycero-3-phospho-1D-myo-inositol + CoA. Its pathway is phospholipid metabolism; CDP-diacylglycerol biosynthesis; CDP-diacylglycerol from sn-glycerol 3-phosphate: step 2/3. Exhibits acyl-CoA:lysocardiolipin acyltransferase (ALCAT) activity; catalyzes the reacylation of lyso-cardiolipin to cardiolipin (CL), a key step in CL remodeling. Recognizes both monolysocardiolipin and dilysocardiolipin as substrates with a preference for linoleoyl-CoA and oleoyl-CoA as acyl donors. Also exhibits 1-acyl-sn-glycerol-3-phosphate acyltransferase activity (AGPAT) activity; converts 1-acyl-sn-glycerol-3- phosphate (lysophosphatidic acid or LPA) into 1,2-diacyl-sn-glycerol-3- phosphate (phosphatidic acid or PA) by incorporating an acyl moiety at the sn-2 position of the glycerol backbone. Possesses lysophosphatidylinositol acyltransferase (LPIAT) activity. Possesses lysophosphatidylglycerol acyltransferase (LPGAT) activity. Required for establishment of the hematopoietic and endothelial lineages. The polypeptide is Lysocardiolipin acyltransferase 1 (Lclat1) (Mus musculus (Mouse)).